We begin with the raw amino-acid sequence, 262 residues long: Flap endonuclease Xni (262 aa).

Position 105 (D105) interacts with Mg(2+). Residues 162–259 (ERSQFLDLMA…VIDSQPEKTI (98 aa)) form the 5'-3' exonuclease domain. K(+)-binding residues include L172, A173, P181, I183, and I186. The interaction with DNA stretch occupies residues 185 to 190 (GIGPKS).

The protein belongs to the Xni family. Requires Mg(2+) as cofactor. It depends on K(+) as a cofactor.

Functionally, has flap endonuclease activity. During DNA replication, flap endonucleases cleave the 5'-overhanging flap structure that is generated by displacement synthesis when DNA polymerase encounters the 5'-end of a downstream Okazaki fragment. The polypeptide is Flap endonuclease Xni (Shewanella baltica (strain OS185)).